The primary structure comprises 386 residues: Lipoyl synthase, mitochondrial (386 aa).

Positions 115, 120, 126, 146, 150, 153, and 362 each coordinate [4Fe-4S] cluster. Positions 131-351 constitute a Radical SAM core domain; sequence ETGTATATIM…QKLGMEMGFR (221 aa).

Belongs to the radical SAM superfamily. Lipoyl synthase family. The cofactor is [4Fe-4S] cluster.

The protein localises to the mitochondrion. It catalyses the reaction [[Fe-S] cluster scaffold protein carrying a second [4Fe-4S](2+) cluster] + N(6)-octanoyl-L-lysyl-[protein] + 2 oxidized [2Fe-2S]-[ferredoxin] + 2 S-adenosyl-L-methionine + 4 H(+) = [[Fe-S] cluster scaffold protein] + N(6)-[(R)-dihydrolipoyl]-L-lysyl-[protein] + 4 Fe(3+) + 2 hydrogen sulfide + 2 5'-deoxyadenosine + 2 L-methionine + 2 reduced [2Fe-2S]-[ferredoxin]. Its pathway is protein modification; protein lipoylation via endogenous pathway; protein N(6)-(lipoyl)lysine from octanoyl-[acyl-carrier-protein]: step 2/2. Catalyzes the radical-mediated insertion of two sulfur atoms into the C-6 and C-8 positions of the octanoyl moiety bound to the lipoyl domains of lipoate-dependent enzymes, thereby converting the octanoylated domains into lipoylated derivatives. The polypeptide is Lipoyl synthase, mitochondrial (Picea sitchensis (Sitka spruce)).